We begin with the raw amino-acid sequence, 79 residues long: Acyl carrier protein (79 aa).

In terms of domain architecture, Carrier spans 2–77 (STIEERVKKI…QAIDYVKSHV (76 aa)). Serine 37 is subject to O-(pantetheine 4'-phosphoryl)serine.

Belongs to the acyl carrier protein (ACP) family. Post-translationally, 4'-phosphopantetheine is transferred from CoA to a specific serine of apo-ACP by AcpS. This modification is essential for activity because fatty acids are bound in thioester linkage to the sulfhydryl of the prosthetic group.

Its subcellular location is the cytoplasm. It participates in lipid metabolism; fatty acid biosynthesis. Carrier of the growing fatty acid chain in fatty acid biosynthesis. The polypeptide is Acyl carrier protein (Xanthomonas oryzae pv. oryzae (strain MAFF 311018)).